The following is a 252-amino-acid chain: RNA-binding protein 2 (252 aa).

Disordered stretches follow at residues 1–34 (MADGFWNRQQQHLPPPGGMLKRPRTEYDTAPSGV) and 232–252 (RLQFSRSPGRRSGGPGPRGKR). The 87-residue stretch at 152–238 (STLYVEGLPS…SYLRLQFSRS (87 aa)) folds into the RRM domain. Residues 242–252 (RSGGPGPRGKR) are compositionally biased toward gly residues.

In terms of biological role, probable RNA-binding protein. This is RNA-binding protein 2 from Medicago truncatula (Barrel medic).